Here is a 560-residue protein sequence, read N- to C-terminus: Protein GAT2 (560 aa).

Disordered regions lie at residues 274-297, 345-383, and 412-461; these read RQQEQQQLKQQESEKESSSPFSNK, FLSTSSSSPSPTAGSAPLQKLQVPRQDDPNDKKMNISSS, and LNTK…SDEK. Low complexity predominate over residues 347–361; sequence STSSSSPSPTAGSAP. Residues 369 to 378 show a composition bias toward basic and acidic residues; the sequence is RQDDPNDKKM. Positions 414–425 are enriched in basic residues; it reads TKKKNNRGRPRA. Polar residues predominate over residues 428–456; the sequence is RQPTLTTSSHFINNSNPGAAAVSTTTPAA. The GATA-type zinc finger occupies 472 to 497; the sequence is CFHCGETETPEWRKGPYGTRTLCNAC.

This chain is Protein GAT2 (GAT2), found in Saccharomyces cerevisiae (strain ATCC 204508 / S288c) (Baker's yeast).